Reading from the N-terminus, the 250-residue chain is tRNA (guanine-N(1)-)-methyltransferase (250 aa).

Residues Gly-116 and Ile-136–Leu-141 each bind S-adenosyl-L-methionine.

The protein belongs to the RNA methyltransferase TrmD family. Homodimer.

It is found in the cytoplasm. The catalysed reaction is guanosine(37) in tRNA + S-adenosyl-L-methionine = N(1)-methylguanosine(37) in tRNA + S-adenosyl-L-homocysteine + H(+). Functionally, specifically methylates guanosine-37 in various tRNAs. This chain is tRNA (guanine-N(1)-)-methyltransferase, found in Pseudomonas fluorescens (strain SBW25).